Consider the following 142-residue polypeptide: Putative pre-16S rRNA nuclease (142 aa).

The protein belongs to the YqgF nuclease family.

It is found in the cytoplasm. Functionally, could be a nuclease involved in processing of the 5'-end of pre-16S rRNA. The chain is Putative pre-16S rRNA nuclease from Prosthecochloris aestuarii (strain DSM 271 / SK 413).